The sequence spans 388 residues: Succinate--CoA ligase [ADP-forming] subunit beta (388 aa).

Residues 9–244 enclose the ATP-grasp domain; the sequence is KSLFAEYGLP…PSQDDAREAH (236 aa). Residues Lys-46, 53 to 55, Glu-99, Thr-102, and Glu-107 each bind ATP; that span reads GRG. Mg(2+) contacts are provided by Asn-199 and Asp-213. Substrate-binding positions include Asn-264 and 321-323; that span reads GIV.

It belongs to the succinate/malate CoA ligase beta subunit family. Heterotetramer of two alpha and two beta subunits. It depends on Mg(2+) as a cofactor.

The enzyme catalyses succinate + ATP + CoA = succinyl-CoA + ADP + phosphate. It carries out the reaction GTP + succinate + CoA = succinyl-CoA + GDP + phosphate. It participates in carbohydrate metabolism; tricarboxylic acid cycle; succinate from succinyl-CoA (ligase route): step 1/1. Succinyl-CoA synthetase functions in the citric acid cycle (TCA), coupling the hydrolysis of succinyl-CoA to the synthesis of either ATP or GTP and thus represents the only step of substrate-level phosphorylation in the TCA. The beta subunit provides nucleotide specificity of the enzyme and binds the substrate succinate, while the binding sites for coenzyme A and phosphate are found in the alpha subunit. The chain is Succinate--CoA ligase [ADP-forming] subunit beta from Shewanella denitrificans (strain OS217 / ATCC BAA-1090 / DSM 15013).